The chain runs to 32 residues: Photosystem II reaction center protein Z (32 aa).

A helical membrane pass occupies residues 12 to 32 (IGSAAWAGLVLLVGTLNYLVI).

This sequence belongs to the PsbZ family. PSII is composed of 1 copy each of membrane proteins PsbA, PsbB, PsbC, PsbD, PsbE, PsbF, PsbH, PsbI, PsbJ, PsbK, PsbL, PsbM, PsbT, PsbY, PsbZ, Psb30/Ycf12, at least 3 peripheral proteins of the oxygen-evolving complex and a large number of cofactors. It forms dimeric complexes.

The protein resides in the plastid. Its subcellular location is the chloroplast thylakoid membrane. Its function is as follows. May control the interaction of photosystem II (PSII) cores with the light-harvesting antenna, regulates electron flow through the 2 photosystem reaction centers. PSII is a light-driven water plastoquinone oxidoreductase, using light energy to abstract electrons from H(2)O, generating a proton gradient subsequently used for ATP formation. This chain is Photosystem II reaction center protein Z, found in Euglena anabaena (Euglenaria anabaena).